Consider the following 343-residue polypeptide: Thiamine thiazole synthase 4, chloroplastic (343 aa).

Residues Ala-89, 109–110 (EQ), Gly-117, and Ala-182 contribute to the substrate site. Cys-211 bears the 2,3-didehydroalanine (Cys) mark. Substrate is bound by residues Asp-213, His-228, Met-280, and 290–292 (RMG).

This sequence belongs to the THI4 family. As to quaternary structure, homooctamer. Requires Fe cation as cofactor. Post-translationally, during the catalytic reaction, a sulfide is transferred from Cys-211 to a reaction intermediate, generating a dehydroalanine residue.

The protein localises to the plastid. It localises to the chloroplast. It catalyses the reaction [ADP-thiazole synthase]-L-cysteine + glycine + NAD(+) = [ADP-thiazole synthase]-dehydroalanine + ADP-5-ethyl-4-methylthiazole-2-carboxylate + nicotinamide + 3 H2O + 2 H(+). In terms of biological role, involved in biosynthesis of the thiamine precursor thiazole. Catalyzes the conversion of NAD and glycine to adenosine diphosphate 5-(2-hydroxyethyl)-4-methylthiazole-2-carboxylic acid (ADT), an adenylated thiazole intermediate. The reaction includes an iron-dependent sulfide transfer from a conserved cysteine residue of the protein to a thiazole intermediate. The enzyme can only undergo a single turnover, which suggests it is a suicide enzyme. May have additional roles in adaptation to various stress conditions and in DNA damage tolerance. This chain is Thiamine thiazole synthase 4, chloroplastic, found in Physcomitrium patens (Spreading-leaved earth moss).